Consider the following 159-residue polypeptide: Keratin-associated protein 9-8 (159 aa).

15 repeat units span residues 8 to 12, 13 to 17, 32 to 36, 37 to 41, 46 to 50, 51 to 55, 56 to 60, 65 to 69, 70 to 74, 75 to 79, 80 to 84, 129 to 133, 134 to 138, 139 to 142, and 153 to 157. Residues 8–157 form a 15 X 5 AA repeats of C-C-[RQVSGE]-[SPSNQ]-[TASPI] region; the sequence is CCQPTCCRTT…TCVSSCCQPS (150 aa).

It belongs to the KRTAP type 9 family. As to quaternary structure, interacts with hair keratins.

In terms of biological role, in the hair cortex, hair keratin intermediate filaments are embedded in an interfilamentous matrix, consisting of hair keratin-associated proteins (KRTAP), which are essential for the formation of a rigid and resistant hair shaft through their extensive disulfide bond cross-linking with abundant cysteine residues of hair keratins. The matrix proteins include the high-sulfur and high-glycine-tyrosine keratins. The sequence is that of Keratin-associated protein 9-8 (KRTAP9-8) from Homo sapiens (Human).